A 284-amino-acid chain; its full sequence is Nucleotide-binding protein NGK_0463 (284 aa).

8–15 (GLSGSGKS) serves as a coordination point for ATP. 58–61 (DVRS) contributes to the GTP binding site.

It belongs to the RapZ-like family.

In terms of biological role, displays ATPase and GTPase activities. This Neisseria gonorrhoeae (strain NCCP11945) protein is Nucleotide-binding protein NGK_0463.